A 388-amino-acid chain; its full sequence is Cytochrome b (388 aa).

The next 4 membrane-spanning stretches (helical) occupy residues 38–58 (FGCL…FLAM), 82–104 (WLLR…LHIF), 119–139 (VWCL…IGYV), and 185–205 (FFSL…LHLA). Residues His88 and His102 each coordinate heme b. Heme b-binding residues include His189 and His203. His208 contacts a ubiquinone. The next 4 helical transmembrane spans lie at 231 to 251 (FYVK…IWIF), 295 to 315 (AGGV…PFFK), 327 to 347 (IHQG…WIGC), and 354 to 373 (FVTI…AITP).

This sequence belongs to the cytochrome b family. In terms of assembly, the main subunits of complex b-c1 are: cytochrome b, cytochrome c1 and the Rieske protein. Heme b is required as a cofactor.

Its subcellular location is the mitochondrion inner membrane. In terms of biological role, component of the ubiquinol-cytochrome c reductase complex (complex III or cytochrome b-c1 complex) that is part of the mitochondrial respiratory chain. The b-c1 complex mediates electron transfer from ubiquinol to cytochrome c. Contributes to the generation of a proton gradient across the mitochondrial membrane that is then used for ATP synthesis. The chain is Cytochrome b (MT-CYB) from Zea mays (Maize).